A 236-amino-acid chain; its full sequence is Proteasome subunit alpha (236 aa).

It belongs to the peptidase T1A family. The 20S proteasome core is composed of 14 alpha and 14 beta subunits that assemble into four stacked heptameric rings, resulting in a barrel-shaped structure. The two inner rings, each composed of seven catalytic beta subunits, are sandwiched by two outer rings, each composed of seven alpha subunits. The catalytic chamber with the active sites is on the inside of the barrel. Has a gated structure, the ends of the cylinder being occluded by the N-termini of the alpha-subunits. Is capped by the proteasome-associated ATPase, ARC.

The protein localises to the cytoplasm. It participates in protein degradation; proteasomal Pup-dependent pathway. With respect to regulation, the formation of the proteasomal ATPase ARC-20S proteasome complex, likely via the docking of the C-termini of ARC into the intersubunit pockets in the alpha-rings, may trigger opening of the gate for substrate entry. Interconversion between the open-gate and close-gate conformations leads to a dynamic regulation of the 20S proteasome proteolysis activity. Functionally, component of the proteasome core, a large protease complex with broad specificity involved in protein degradation. In Jonesia denitrificans (strain ATCC 14870 / DSM 20603 / BCRC 15368 / CIP 55.134 / JCM 11481 / NBRC 15587 / NCTC 10816 / Prevot 55134) (Listeria denitrificans), this protein is Proteasome subunit alpha.